The sequence spans 1017 residues: Voltage-gated delayed rectifier potassium channel KCNH4 (1017 aa).

Topologically, residues 1–232 are cytoplasmic; sequence MPVMKGLLAP…YSIPKAVWDG (232 aa). Positions 14–90 constitute a PAS domain; the sequence is FLDTIATRFD…QRLQKALEGH (77 aa). A PAC domain is found at 93–145; it reads HRAEICFYRKDGSAFWCLLDMMPIKNELGEVVLFLFSFKDISQSGGPGLGSPG. The disordered stretch occupies residues 139–170; the sequence is PGLGSPGIHGDNNNHENSLGRRGASSRLRSTR. A helical membrane pass occupies residues 233 to 253; it reads LILLATFYVAVTVPYNVCFAG. At 254–262 the chain is on the extracellular side; it reads DDDTPITSR. Residues 263–283 traverse the membrane as a helical segment; the sequence is HTLVSDIAVEMLFILDIILNF. Topologically, residues 284–305 are cytoplasmic; the sequence is RTTYVSQSGQVVSAPRSIGLHY. Residues 306–326 form a helical membrane-spanning segment; the sequence is LATWFFVDLIAALPFDLLYVF. Over 327 to 334 the chain is Extracellular; sequence NITVTSLV. A helical; Voltage-sensor membrane pass occupies residues 335 to 355; the sequence is HLLKTVRLLRLLRLLQKLERY. Residues 356–364 are Cytoplasmic-facing; it reads SQCSAVVLT. The chain crosses the membrane as a helical span at residues 365–385; that stretch reads LLMSVFALLAHWMACVWYVIG. The Extracellular portion of the chain corresponds to 386–427; that stretch reads RREMEANDPLLWDIGWLHELGKRLEEPYVNGSAGGPSRRSAY. An N-linked (GlcNAc...) asparagine glycan is attached at asparagine 415. The pore-forming intramembrane region spans 428-448; the sequence is IAALYFTLSSLTSVGFGNVCA. A Selectivity filter motif is present at residues 440-445; it reads SVGFGN. The Extracellular segment spans residues 449–454; that stretch reads NTDAEK. Residues 455–475 form a helical membrane-spanning segment; it reads IFSICTMLIGALMHAVVFGNV. The Cytoplasmic portion of the chain corresponds to 476-1017; sequence TAIIQRMYSR…SFQSGSDTFH (542 aa). Residues 557–621 form a cNMP-binding domain region; the sequence is LFGAASRGCL…AILGKGDLIG (65 aa). Disordered regions lie at residues 690-749 and 771-870; these read GSEN…PNLS and LVSS…ELAT. Over residues 703–726 the composition is skewed to polar residues; it reads PRLSQARSDTLGSSSDKTLPSITE. Low complexity-rich tracts occupy residues 771 to 786 and 806 to 820; these read LVSS…PALA and PPQL…FGPP. Positions 873-907 form a coiled coil; the sequence is AEEVKEKVCRLNQEISRLNQEVSQLSRELRQVMGL. Residues 972–1017 are disordered; the sequence is SELRSSMVPPFPSEPDPLGPSPVPEASPLTPSLLKHSFQSGSDTFH. Residues 980–996 show a composition bias toward pro residues; the sequence is PPFPSEPDPLGPSPVPE. Polar residues predominate over residues 1008–1017; sequence SFQSGSDTFH.

The protein belongs to the potassium channel family. H (Eag) (TC 1.A.1.20) subfamily. Kv12.3/KCNH4 sub-subfamily. As to quaternary structure, the potassium channel is probably composed of a homo- or heterotetrameric complex of pore-forming alpha subunits that can associate with modulating beta subunits. As to expression, highly expressed in adult testis, and in adult and embryonic brain. In adult brain found in piriform cortex, olfactory tubercle, cerebral cortex, hippocampus pyramidial cells and dentate gyrus and basal ganglia of caudate/putamen and accumbens nucleus. Detected at intermediate levels in lung, spinal cord, and pituitary.

It is found in the membrane. It carries out the reaction K(+)(in) = K(+)(out). Functionally, pore-forming (alpha) subunit of a voltage-gated delayed rectifier. Activates at more negative voltages, exhibits fast prepulse-independent activation kinetics and deactivates much more slowly, but shows no inactivation. The chain is Voltage-gated delayed rectifier potassium channel KCNH4 from Rattus norvegicus (Rat).